Consider the following 314-residue polypeptide: tRNA pseudouridine synthase B (314 aa).

Substrate is bound at residue histidine 43. The active-site Nucleophile is the aspartate 48. Tyrosine 76, tyrosine 179, and leucine 200 together coordinate substrate.

It belongs to the pseudouridine synthase TruB family. Type 1 subfamily.

The catalysed reaction is uridine(55) in tRNA = pseudouridine(55) in tRNA. Responsible for synthesis of pseudouridine from uracil-55 in the psi GC loop of transfer RNAs. This is tRNA pseudouridine synthase B from Salmonella arizonae (strain ATCC BAA-731 / CDC346-86 / RSK2980).